Here is a 711-residue protein sequence, read N- to C-terminus: Zinc finger CCCH domain-containing protein 43 (711 aa).

The disordered stretch occupies residues 1 to 49; that stretch reads MPQDDDWFWGRPTPVVVGDGETTSKPKPPVAGKTKKVEEQHPRRPGEPD. Residues 35–47 are compositionally biased toward basic and acidic residues; the sequence is KKVEEQHPRRPGE. 3 C3H1-type zinc fingers span residues 44–72, 90–118, and 157–185; these read RPGE…HPDP, RPGE…HPPR, and RPGT…HPDP. Positions 384–637 constitute an MIF4G domain; the sequence is LKTLKSILNT…GAISYLIEKE (254 aa).

This Oryza sativa subsp. japonica (Rice) protein is Zinc finger CCCH domain-containing protein 43.